A 430-amino-acid chain; its full sequence is Tol-Pal system protein TolB (430 aa).

The first 21 residues, 1 to 21, serve as a signal peptide directing secretion; the sequence is MKQALRVAFGFLMLWAAVLHA.

The protein belongs to the TolB family. In terms of assembly, the Tol-Pal system is composed of five core proteins: the inner membrane proteins TolA, TolQ and TolR, the periplasmic protein TolB and the outer membrane protein Pal. They form a network linking the inner and outer membranes and the peptidoglycan layer.

The protein localises to the periplasm. Part of the Tol-Pal system, which plays a role in outer membrane invagination during cell division and is important for maintaining outer membrane integrity. TolB occupies a key intermediary position in the Tol-Pal system because it communicates directly with both membrane-embedded components, Pal in the outer membrane and TolA in the inner membrane. The protein is Tol-Pal system protein TolB of Salmonella enteritidis PT4 (strain P125109).